Reading from the N-terminus, the 554-residue chain is Phosphoglucomutase (554 aa).

Alpha-D-glucose 1,6-bisphosphate is bound at residue R21. At T111 the chain carries Phosphothreonine. S113 is an alpha-D-glucose 1,6-bisphosphate binding site. S113 acts as the Phosphoserine intermediate in catalysis. 4 residues coordinate Mg(2+): S113, D278, D280, and D282. S113 is subject to Phosphoserine. 6 residues coordinate alpha-D-glucose 1,6-bisphosphate: D282, R283, T346, E365, S367, and K378.

It belongs to the phosphohexose mutase family. In terms of assembly, monomer. It depends on Mg(2+) as a cofactor.

The protein localises to the cytoplasm. Its subcellular location is the nucleus. The catalysed reaction is alpha-D-glucose 1-phosphate = alpha-D-glucose 6-phosphate. It catalyses the reaction O-phospho-L-seryl-[protein] + alpha-D-glucose 1-phosphate = alpha-D-glucose 1,6-bisphosphate + L-seryl-[protein]. The enzyme catalyses alpha-D-glucose 1,6-bisphosphate + L-seryl-[protein] = O-phospho-L-seryl-[protein] + alpha-D-glucose 6-phosphate. Its function is as follows. Catalyzes the reversible isomerization of alpha-D-glucose 1-phosphate to alpha-D-glucose 6-phosphate. The mechanism proceeds via the intermediate compound alpha-D-glucose 1,6-bisphosphate. Key enzyme in hexose metabolism. The reverse reaction is an essential step for biosynthesis because glucose 1-phosphate is the starting point for the synthesis of UDP-glucose, which acts as a precursor for the synthesis of oligosaccharides and trehalose. The sequence is that of Phosphoglucomutase from Schizosaccharomyces pombe (strain 972 / ATCC 24843) (Fission yeast).